A 443-amino-acid polypeptide reads, in one-letter code: Ribosomal protein uS12 methylthiotransferase RimO (443 aa).

An MTTase N-terminal domain is found at 8–118 (PKVGFVSLGC…VVNAVHEVVP (111 aa)). [4Fe-4S] cluster-binding residues include C17, C53, C82, C151, C155, and C158. The region spanning 137–375 (LTPRHYAYLK…MAHQQAISAA (239 aa)) is the Radical SAM core domain. A TRAM domain is found at 378–443 (QQRIGKEIEV…DEYDMWAEPI (66 aa)).

Belongs to the methylthiotransferase family. RimO subfamily. Requires [4Fe-4S] cluster as cofactor.

It is found in the cytoplasm. It catalyses the reaction L-aspartate(89)-[ribosomal protein uS12]-hydrogen + (sulfur carrier)-SH + AH2 + 2 S-adenosyl-L-methionine = 3-methylsulfanyl-L-aspartate(89)-[ribosomal protein uS12]-hydrogen + (sulfur carrier)-H + 5'-deoxyadenosine + L-methionine + A + S-adenosyl-L-homocysteine + 2 H(+). In terms of biological role, catalyzes the methylthiolation of an aspartic acid residue of ribosomal protein uS12. This is Ribosomal protein uS12 methylthiotransferase RimO from Pseudomonas entomophila (strain L48).